Here is a 175-residue protein sequence, read N- to C-terminus: Large ribosomal subunit protein uL10 (175 aa).

It belongs to the universal ribosomal protein uL10 family. Part of the ribosomal stalk of the 50S ribosomal subunit. The N-terminus interacts with L11 and the large rRNA to form the base of the stalk. The C-terminus forms an elongated spine to which L12 dimers bind in a sequential fashion forming a multimeric L10(L12)X complex.

Forms part of the ribosomal stalk, playing a central role in the interaction of the ribosome with GTP-bound translation factors. The sequence is that of Large ribosomal subunit protein uL10 from Xylella fastidiosa (strain M12).